A 250-amino-acid chain; its full sequence is Probable transcriptional regulatory protein Plut_1643 (250 aa).

It belongs to the TACO1 family.

It localises to the cytoplasm. In Chlorobium luteolum (strain DSM 273 / BCRC 81028 / 2530) (Pelodictyon luteolum), this protein is Probable transcriptional regulatory protein Plut_1643.